The chain runs to 1004 residues: 2-oxoglutarate dehydrogenase E1 component (1004 aa).

It belongs to the alpha-ketoglutarate dehydrogenase family. As to quaternary structure, homodimer. Part of the 2-oxoglutarate dehydrogenase (OGDH) complex composed of E1 (2-oxoglutarate dehydrogenase), E2 (dihydrolipoamide succinyltransferase) and E3 (dihydrolipoamide dehydrogenase); the complex contains multiple copies of the three enzymatic components (E1, E2 and E3). Requires thiamine diphosphate as cofactor.

The enzyme catalyses N(6)-[(R)-lipoyl]-L-lysyl-[protein] + 2-oxoglutarate + H(+) = N(6)-[(R)-S(8)-succinyldihydrolipoyl]-L-lysyl-[protein] + CO2. In terms of biological role, E1 component of the 2-oxoglutarate dehydrogenase (OGDH) complex which catalyzes the decarboxylation of 2-oxoglutarate, the first step in the conversion of 2-oxoglutarate to succinyl-CoA and CO(2). The polypeptide is 2-oxoglutarate dehydrogenase E1 component (Brucella canis (strain ATCC 23365 / NCTC 10854 / RM-666)).